The sequence spans 210 residues: Coatomer subunit zeta-2 (210 aa).

Positions 1–12 are enriched in basic and acidic residues; sequence MQRPEAWPRPHP. A disordered region spans residues 1–34; it reads MQRPEAWPRPHPGEGAAAAQAGGPAPPARAGEPS. Residues 13–34 show a composition bias toward low complexity; that stretch reads GEGAAAAQAGGPAPPARAGEPS.

This sequence belongs to the adaptor complexes small subunit family. Oligomeric complex.

It localises to the cytoplasm. It is found in the endoplasmic reticulum-Golgi intermediate compartment membrane. The protein localises to the golgi apparatus membrane. The protein resides in the cytoplasmic vesicle. Its subcellular location is the COPI-coated vesicle membrane. Functionally, the coatomer is a cytosolic protein complex that binds to dilysine motifs and reversibly associates with Golgi non-clathrin-coated vesicles, which further mediate biosynthetic protein transport from the ER, via the Golgi up to the trans Golgi network. Coatomer complex is required for budding from Golgi membranes, and is essential for the retrograde Golgi-to-ER transport of dilysine-tagged proteins. The zeta subunit may be involved in regulating the coat assembly and, hence, the rate of biosynthetic protein transport due to its association-dissociation properties with the coatomer complex. The polypeptide is Coatomer subunit zeta-2 (COPZ2) (Homo sapiens (Human)).